We begin with the raw amino-acid sequence, 499 residues long: Guanosine-5'-triphosphate,3'-diphosphate pyrophosphatase (499 aa).

Belongs to the GppA/Ppx family. GppA subfamily.

The catalysed reaction is guanosine 3'-diphosphate 5'-triphosphate + H2O = guanosine 3',5'-bis(diphosphate) + phosphate + H(+). The protein operates within purine metabolism; ppGpp biosynthesis; ppGpp from GTP: step 2/2. Functionally, catalyzes the conversion of pppGpp to ppGpp. Guanosine pentaphosphate (pppGpp) is a cytoplasmic signaling molecule which together with ppGpp controls the 'stringent response', an adaptive process that allows bacteria to respond to amino acid starvation, resulting in the coordinated regulation of numerous cellular activities. This is Guanosine-5'-triphosphate,3'-diphosphate pyrophosphatase from Klebsiella pneumoniae (strain 342).